The primary structure comprises 317 residues: Spermidine synthase 2 (317 aa).

One can recognise a PABS domain in the interval 27-264 (PGWFSEISPL…GMIGFMLCST (238 aa)). Position 58 (Gln58) interacts with S-adenosyl 3-(methylsulfanyl)propylamine. Tyr88 provides a ligand contact to putrescine. Residues Gln89, Asp113, Glu133, 164–165 (DG), and Asp183 contribute to the S-adenosyl 3-(methylsulfanyl)propylamine site. The Proton acceptor role is filled by Asp183. Residues 183 to 186 (DSSD) and Tyr252 contribute to the putrescine site.

It belongs to the spermidine/spermine synthase family.

The catalysed reaction is S-adenosyl 3-(methylsulfanyl)propylamine + putrescine = S-methyl-5'-thioadenosine + spermidine + H(+). It functions in the pathway amine and polyamine biosynthesis; spermidine biosynthesis; spermidine from putrescine: step 1/1. This is Spermidine synthase 2 from Datura stramonium (Jimsonweed).